We begin with the raw amino-acid sequence, 308 residues long: Ectoine dioxygenase (308 aa).

Gln131 serves as a coordination point for L-ectoine. A 2-oxoglutarate-binding site is contributed by Lys137. Fe cation-binding residues include His148, Asp150, and His249.

This sequence belongs to the PhyH family. EctD subfamily. In terms of assembly, homodimer. Fe(2+) serves as cofactor.

The catalysed reaction is L-ectoine + 2-oxoglutarate + O2 = 5-hydroxyectoine + succinate + CO2. Involved in the biosynthesis of 5-hydroxyectoine, called compatible solute, which helps organisms to survive extreme osmotic stress by acting as a highly soluble organic osmolyte. Catalyzes the 2-oxoglutarate-dependent selective hydroxylation of L-ectoine to yield (4S,5S)-5-hydroxyectoine. The sequence is that of Ectoine dioxygenase from Bordetella parapertussis (strain 12822 / ATCC BAA-587 / NCTC 13253).